The chain runs to 622 residues: WD repeat-containing protein 46 (622 aa).

Positions 1–135 (METAPKPGRG…KTQSKLEKAE (135 aa)) are disordered. Ser-41 carries the post-translational modification Phosphoserine. The span at 106–118 (EEARKFCRIDKSK) shows a compositional bias: basic and acidic residues. WD repeat units lie at residues 192 to 233 (LRQF…CEIN), 234 to 271 (VMEAVRDIHFLHSEALLAVAQNRWLYIYDNQGIELHCI), 314 to 353 (VRAGRLSVMAQNPYNAVIHLGHSNGTVSLWSPAVKEPLAK), 356 to 395 (CHRGGVRAVAVDSTGTYMATSGLDHQLKIFDLRGTFQPLS), and 398 to 435 (TLPQGAGHLAFSQRGLLVAGMGDVVNIWAGQGKASPPS). The tract at residues 547–622 (AAFQPKAKQK…AREGGLQVDP (76 aa)) is disordered. A compositionally biased stretch (basic and acidic residues) spans 571 to 582 (VMDQEHRDKVRQ).

Part of the small subunit (SSU) processome, composed of more than 70 proteins and the RNA chaperone small nucleolar RNA (snoRNA) U3. Interacts with DDX21, NCL, NOP2 and EBNA1BP2.

The protein localises to the nucleus. The protein resides in the nucleolus. Its function is as follows. Scaffold component of the nucleolar structure. Required for localization of DDX21 and NCL to the granular compartment of the nucleolus. Part of the small subunit (SSU) processome, first precursor of the small eukaryotic ribosomal subunit. During the assembly of the SSU processome in the nucleolus, many ribosome biogenesis factors, an RNA chaperone and ribosomal proteins associate with the nascent pre-rRNA and work in concert to generate RNA folding, modifications, rearrangements and cleavage as well as targeted degradation of pre-ribosomal RNA by the RNA exosome. This chain is WD repeat-containing protein 46 (Wdr46), found in Mus musculus (Mouse).